The primary structure comprises 426 residues: Cell adhesion molecule CEACAM16 (426 aa).

A signal peptide spans 1–22 (MKMPLTWYSWFLLSAWILNTGA). N-linked (GlcNAc...) asparagine glycosylation is present at Asn-38. Residues 77-96 (ETPGPAHTGREAVRPDGSLD) are disordered. A compositionally biased stretch (basic and acidic residues) spans 84–95 (TGREAVRPDGSL). Ig-like C2-type domains lie at 134–219 (PPTV…LNLT) and 224–310 (PERV…ASVV). A disulfide bridge connects residues Cys-155 and Cys-202. Asn-217 carries an N-linked (GlcNAc...) asparagine glycan. An intrachain disulfide couples Cys-253 to Cys-294.

This sequence belongs to the immunoglobulin superfamily. CEA family. As to quaternary structure, homooligomer; can for homodimers and homotetramers. Interacts with TECTA and TECTB. In terms of tissue distribution, expressed in cochlear outer hair cells (OHC).

The protein localises to the secreted. Its function is as follows. Required for proper hearing, plays a role in maintaining the integrity of the tectorial membrane. This Mus musculus (Mouse) protein is Cell adhesion molecule CEACAM16.